Consider the following 250-residue polypeptide: 2,3-bisphosphoglycerate-dependent phosphoglycerate mutase (250 aa).

Substrate contacts are provided by residues 10–17 (RHGESQWN), 23–24 (TG), arginine 62, 89–92 (ERHY), lysine 100, 116–117 (RR), and 185–186 (GN). The active-site Tele-phosphohistidine intermediate is histidine 11. Residue glutamate 89 is the Proton donor/acceptor of the active site.

Belongs to the phosphoglycerate mutase family. BPG-dependent PGAM subfamily. Homodimer.

The catalysed reaction is (2R)-2-phosphoglycerate = (2R)-3-phosphoglycerate. It functions in the pathway carbohydrate degradation; glycolysis; pyruvate from D-glyceraldehyde 3-phosphate: step 3/5. Functionally, catalyzes the interconversion of 2-phosphoglycerate and 3-phosphoglycerate. The polypeptide is 2,3-bisphosphoglycerate-dependent phosphoglycerate mutase (Yersinia pseudotuberculosis serotype IB (strain PB1/+)).